Reading from the N-terminus, the 138-residue chain is Large ribosomal subunit protein uL16 (138 aa).

Positions Met-1–Gly-19 are enriched in basic residues. Residues Met-1–Gly-24 form a disordered region.

Belongs to the universal ribosomal protein uL16 family. As to quaternary structure, part of the 50S ribosomal subunit.

Binds 23S rRNA and is also seen to make contacts with the A and possibly P site tRNAs. This chain is Large ribosomal subunit protein uL16, found in Micrococcus luteus (strain ATCC 4698 / DSM 20030 / JCM 1464 / CCM 169 / CCUG 5858 / IAM 1056 / NBRC 3333 / NCIMB 9278 / NCTC 2665 / VKM Ac-2230) (Micrococcus lysodeikticus).